The primary structure comprises 347 residues: Quinolinate synthase (347 aa).

Iminosuccinate contacts are provided by histidine 47 and serine 68. Cysteine 113 is a [4Fe-4S] cluster binding site. Residues tyrosine 139 to asparagine 141 and serine 156 each bind iminosuccinate. Cysteine 200 contacts [4Fe-4S] cluster. Iminosuccinate is bound by residues histidine 226–glutamate 228 and threonine 243. Cysteine 297 contacts [4Fe-4S] cluster.

It belongs to the quinolinate synthase family. Type 1 subfamily. [4Fe-4S] cluster is required as a cofactor.

The protein resides in the cytoplasm. The catalysed reaction is iminosuccinate + dihydroxyacetone phosphate = quinolinate + phosphate + 2 H2O + H(+). The protein operates within cofactor biosynthesis; NAD(+) biosynthesis; quinolinate from iminoaspartate: step 1/1. In terms of biological role, catalyzes the condensation of iminoaspartate with dihydroxyacetone phosphate to form quinolinate. This Salmonella paratyphi A (strain ATCC 9150 / SARB42) protein is Quinolinate synthase.